Consider the following 56-residue polypeptide: Large ribosomal subunit protein eL40 (56 aa).

Belongs to the eukaryotic ribosomal protein eL40 family.

This is Large ribosomal subunit protein eL40 from Sulfurisphaera tokodaii (strain DSM 16993 / JCM 10545 / NBRC 100140 / 7) (Sulfolobus tokodaii).